Here is a 403-residue protein sequence, read N- to C-terminus: 8-amino-7-oxononanoate synthase (403 aa).

R30 is a substrate binding site. 121–122 provides a ligand contact to pyridoxal 5'-phosphate; it reads GY. Substrate is bound at residue H146. Residues S192, H220, and T248 each coordinate pyridoxal 5'-phosphate. At K251 the chain carries N6-(pyridoxal phosphate)lysine. Substrate is bound at residue T367.

The protein belongs to the class-II pyridoxal-phosphate-dependent aminotransferase family. BioF subfamily. In terms of assembly, homodimer. The cofactor is pyridoxal 5'-phosphate.

It catalyses the reaction 6-carboxyhexanoyl-[ACP] + L-alanine + H(+) = (8S)-8-amino-7-oxononanoate + holo-[ACP] + CO2. It functions in the pathway cofactor biosynthesis; biotin biosynthesis. Its function is as follows. Catalyzes the decarboxylative condensation of pimeloyl-[acyl-carrier protein] and L-alanine to produce 8-amino-7-oxononanoate (AON), [acyl-carrier protein], and carbon dioxide. This is 8-amino-7-oxononanoate synthase from Burkholderia vietnamiensis (strain G4 / LMG 22486) (Burkholderia cepacia (strain R1808)).